Here is a 206-residue protein sequence, read N- to C-terminus: Small ribosomal subunit protein uS4 (206 aa).

The 62-residue stretch at 96 to 157 (CRLDNVVYRM…KCRNQLRIAQ (62 aa)) folds into the S4 RNA-binding domain.

The protein belongs to the universal ribosomal protein uS4 family. Part of the 30S ribosomal subunit. Contacts protein S5. The interaction surface between S4 and S5 is involved in control of translational fidelity.

Its function is as follows. One of the primary rRNA binding proteins, it binds directly to 16S rRNA where it nucleates assembly of the body of the 30S subunit. Functionally, with S5 and S12 plays an important role in translational accuracy. This Stutzerimonas stutzeri (strain A1501) (Pseudomonas stutzeri) protein is Small ribosomal subunit protein uS4.